Reading from the N-terminus, the 144-residue chain is Large ribosomal subunit protein uL15 (144 aa).

The segment at Gly-20–Gly-49 is disordered. A compositionally biased stretch (gly residues) spans Arg-21–Gly-31.

Belongs to the universal ribosomal protein uL15 family. As to quaternary structure, part of the 50S ribosomal subunit.

Its function is as follows. Binds to the 23S rRNA. This chain is Large ribosomal subunit protein uL15, found in Neisseria gonorrhoeae (strain ATCC 700825 / FA 1090).